Here is a 343-residue protein sequence, read N- to C-terminus: S-adenosylmethionine:tRNA ribosyltransferase-isomerase (343 aa).

Belongs to the QueA family. Monomer.

It localises to the cytoplasm. The enzyme catalyses 7-aminomethyl-7-carbaguanosine(34) in tRNA + S-adenosyl-L-methionine = epoxyqueuosine(34) in tRNA + adenine + L-methionine + 2 H(+). It functions in the pathway tRNA modification; tRNA-queuosine biosynthesis. Functionally, transfers and isomerizes the ribose moiety from AdoMet to the 7-aminomethyl group of 7-deazaguanine (preQ1-tRNA) to give epoxyqueuosine (oQ-tRNA). This chain is S-adenosylmethionine:tRNA ribosyltransferase-isomerase, found in Pelobacter propionicus (strain DSM 2379 / NBRC 103807 / OttBd1).